The sequence spans 256 residues: MAFTLTNKNVVFVAGLGGIGLDTSKELVKRDLKNLVILDRIENPAAIAELKAINPKVTVTFYPYDVTVPIAETTKLLKTIFAQLKTIDVLINGAGILDDHQIERTIAVNYTGLVNTTTAILDFWDKRKGGPGGIICNIGSVTGFNAIYQVPVYSGTKAAVVNFTSSLAKLAPITGVTAYTVNPGITRTTLVHKFNSWLDVEPQVAEKLLAHPTQPSLACAENFVKAIELNQNGAIWKLDLGTLEAIQWSKHWDSGI.

12–35 (FVAGLGGIGLDTSKELVKRDLKNL) is a binding site for NAD(+). Residue S140 coordinates substrate. The Proton acceptor role is filled by Y153.

It belongs to the short-chain dehydrogenases/reductases (SDR) family. As to quaternary structure, homodimer.

The enzyme catalyses a primary alcohol + NAD(+) = an aldehyde + NADH + H(+). It catalyses the reaction a secondary alcohol + NAD(+) = a ketone + NADH + H(+). This chain is Alcohol dehydrogenase (Adh), found in Drosophila teissieri (Fruit fly).